We begin with the raw amino-acid sequence, 347 residues long: Protein RecA (347 aa).

67–74 (GPESSGKT) provides a ligand contact to ATP. A disordered region spans residues 326–347 (DKLLPGRAPSSEAQGTESGQEA). Residues 336-347 (SEAQGTESGQEA) show a composition bias toward polar residues.

It belongs to the RecA family.

It is found in the cytoplasm. Its function is as follows. Can catalyze the hydrolysis of ATP in the presence of single-stranded DNA, the ATP-dependent uptake of single-stranded DNA by duplex DNA, and the ATP-dependent hybridization of homologous single-stranded DNAs. It interacts with LexA causing its activation and leading to its autocatalytic cleavage. The polypeptide is Protein RecA (Alkalilimnicola ehrlichii (strain ATCC BAA-1101 / DSM 17681 / MLHE-1)).